The primary structure comprises 47 residues: Large ribosomal subunit protein bL34 (47 aa).

This sequence belongs to the bacterial ribosomal protein bL34 family.

The protein is Large ribosomal subunit protein bL34 of Rhodococcus opacus (strain B4).